Reading from the N-terminus, the 202-residue chain is Casparian strip membrane protein 1 (202 aa).

Residues 1-13 (MEKSESSTIQIAE) show a composition bias toward polar residues. The tract at residues 1 to 30 (MEKSESSTIQIAESSKDRKGKAPLLPPPVH) is disordered. Residues 1–42 (MEKSESSTIQIAESSKDRKGKAPLLPPPVHHERAAGYKRGVA) are Cytoplasmic-facing. The helical transmembrane segment at 43–63 (IFDLILRISAATAALAATIVM) threads the bilayer. Over 64–90 (GTTEQTLPFFTQFFQFRASYDDLPTFT) the chain is Extracellular. A helical transmembrane segment spans residues 91-111 (FFVIAMAIVTGYLILSVPFSI). Residues 112-130 (VCIARPVVAAPRILLILCD) lie on the Cytoplasmic side of the membrane. A helical membrane pass occupies residues 131-151 (TLTVTLATSAAGASAAIVYLA). At 152–177 (HNGXSDANWLAICQQFNDFCQRVSGA) the chain is on the extracellular side. A helical transmembrane segment spans residues 178 to 198 (VVAAFVSAVLLIFLVVLSAIV). Residues 199-202 (LKKH) lie on the Cytoplasmic side of the membrane.

The protein belongs to the Casparian strip membrane proteins (CASP) family. Homodimer and heterodimers.

It localises to the cell membrane. Functionally, regulates membrane-cell wall junctions and localized cell wall deposition. Required for establishment of the Casparian strip membrane domain (CSD) and the subsequent formation of Casparian strips, a cell wall modification of the root endodermis that determines an apoplastic barrier between the intraorganismal apoplasm and the extraorganismal apoplasm and prevents lateral diffusion. This is Casparian strip membrane protein 1 from Triphysaria pusilla (Dwarf owl's-clover).